We begin with the raw amino-acid sequence, 202 residues long: UDP-N-acetylglucosamine transferase subunit ALG13 (202 aa).

The protein belongs to the glycosyltransferase 28 family. In terms of assembly, heterodimer with ALG14 to form a functional enzyme.

It localises to the endoplasmic reticulum. The catalysed reaction is an N-acetyl-alpha-D-glucosaminyl-diphospho-di-trans,poly-cis-dolichol + UDP-N-acetyl-alpha-D-glucosamine = an N,N'-diacetylchitobiosyl-diphospho-di-trans,poly-cis-dolichol + UDP + H(+). Functionally, involved in protein N-glycosylation. Essential for the second step of the dolichol-linked oligosaccharide pathway. The sequence is that of UDP-N-acetylglucosamine transferase subunit ALG13 (ALG13) from Saccharomyces cerevisiae (strain ATCC 204508 / S288c) (Baker's yeast).